The chain runs to 102 residues: Large ribosomal subunit protein bL21 (102 aa).

The protein belongs to the bacterial ribosomal protein bL21 family. Part of the 50S ribosomal subunit. Contacts protein L20.

Its function is as follows. This protein binds to 23S rRNA in the presence of protein L20. In Campylobacter hominis (strain ATCC BAA-381 / DSM 21671 / CCUG 45161 / LMG 19568 / NCTC 13146 / CH001A), this protein is Large ribosomal subunit protein bL21.